Here is a 786-residue protein sequence, read N- to C-terminus: Endonuclease MutS2 (786 aa).

335 to 342 (GPNTGGKT) contributes to the ATP binding site. Positions 711 to 786 (LDLRGERFEN…GLGVTVVELK (76 aa)) constitute a Smr domain.

It belongs to the DNA mismatch repair MutS family. MutS2 subfamily. As to quaternary structure, homodimer. Binds to stalled ribosomes, contacting rRNA.

In terms of biological role, endonuclease that is involved in the suppression of homologous recombination and thus may have a key role in the control of bacterial genetic diversity. Acts as a ribosome collision sensor, splitting the ribosome into its 2 subunits. Detects stalled/collided 70S ribosomes which it binds and splits by an ATP-hydrolysis driven conformational change. Acts upstream of the ribosome quality control system (RQC), a ribosome-associated complex that mediates the extraction of incompletely synthesized nascent chains from stalled ribosomes and their subsequent degradation. Probably generates substrates for RQC. This chain is Endonuclease MutS2, found in Bacillus cereus (strain B4264).